Consider the following 570-residue polypeptide: Hydroxylamine reductase (570 aa).

C5, C8, C17, and C23 together coordinate [4Fe-4S] cluster. Hybrid [4Fe-2O-2S] cluster is bound by residues H266, E290, C334, C425, C453, C478, E513, and K515. Residue C425 is modified to Cysteine persulfide.

Belongs to the HCP family. Requires [4Fe-4S] cluster as cofactor. It depends on hybrid [4Fe-2O-2S] cluster as a cofactor.

The protein localises to the cytoplasm. The catalysed reaction is A + NH4(+) + H2O = hydroxylamine + AH2 + H(+). Its function is as follows. Catalyzes the reduction of hydroxylamine to form NH(3) and H(2)O. This is Hydroxylamine reductase from Clostridium botulinum (strain ATCC 19397 / Type A).